Consider the following 260-residue polypeptide: Indole-3-glycerol phosphate synthase (260 aa).

This sequence belongs to the TrpC family.

It catalyses the reaction 1-(2-carboxyphenylamino)-1-deoxy-D-ribulose 5-phosphate + H(+) = (1S,2R)-1-C-(indol-3-yl)glycerol 3-phosphate + CO2 + H2O. It participates in amino-acid biosynthesis; L-tryptophan biosynthesis; L-tryptophan from chorismate: step 4/5. The polypeptide is Indole-3-glycerol phosphate synthase (Staphylococcus aureus (strain Mu3 / ATCC 700698)).